The primary structure comprises 300 residues: Transcription elongation factor A protein 2 (300 aa).

In terms of domain architecture, TFIIS N-terminal spans 6 to 83 (EEIARIARRL…KSWKKLLDAS (78 aa)). Lysine 58 participates in a covalent cross-link: Glycyl lysine isopeptide (Lys-Gly) (interchain with G-Cter in ubiquitin). Phosphoserine occurs at positions 60 and 101. Positions 84 to 131 (DAKARERRRGGSLPTSSSKEASEAQDPSRKRPELPRMPSTPRITTFPP) are disordered. The segment covering 103 to 117 (EASEAQDPSRKRPEL) has biased composition (basic and acidic residues). Residues 139-255 (VRTKCREMLT…EHQMARTGGT (117 aa)) form the TFIIS central domain. Residues 258–298 (DLFTCGKCRKKNCTYTQVQTRSSDEPMTTFVVCNECGNRWK) form a TFIIS-type zinc finger. The Zn(2+) site is built by cysteine 262, cysteine 265, cysteine 290, and cysteine 293.

Belongs to the TFS-II family. In terms of assembly, interacts with the basal transcription factor GTF2B. Interacts with REXO1.

It localises to the nucleus. Functionally, necessary for efficient RNA polymerase II transcription elongation past template-encoded arresting sites. The arresting sites in DNA have the property of trapping a certain fraction of elongating RNA polymerases that pass through, resulting in locked ternary complexes. Cleavage of the nascent transcript by S-II allows the resumption of elongation from the new 3'-terminus. The chain is Transcription elongation factor A protein 2 (TCEA2) from Bos taurus (Bovine).